The following is a 916-amino-acid chain: Cadherin-4 (916 aa).

Residues 1–20 (MTAGAGVLLLLLSLSGALRA) form the signal peptide. Residues 21-169 (HNEDLTTRET…NANGLRRRKR (149 aa)) constitute a propeptide that is removed on maturation. The interval 124–168 (TSSPHSGHKPQKGKKVVALDPSPPPKDTLLPWPQHQNANGLRRRK) is disordered. Residues 129–138 (SGHKPQKGKK) are compositionally biased toward basic residues. Cadherin domains follow at residues 170 to 277 (DWVI…RPEF), 278 to 392 (INQV…PPEF), 393 to 507 (TAST…APYF), 508 to 613 (PSNH…DNAP), and 614 to 724 (ELLP…TIGA). The Extracellular portion of the chain corresponds to 170–734 (DWVIPPINVP…VAAAGLGTGA (565 aa)). 6 N-linked (GlcNAc...) asparagine glycosylation sites follow: Asn-283, Asn-412, Asn-557, Asn-632, Asn-661, and Asn-702. The chain crosses the membrane as a helical span at residues 735–756 (IVAILICILILLTMVLLFVMWM). Over 757-916 (KRREKERHTK…ADMYGGGEED (160 aa)) the chain is Cytoplasmic. The segment at 806-838 (MGHVPSKAPGVRRVDERPVGAEPQYPIRPMVPH) is disordered.

In terms of tissue distribution, expressed mainly in brain but also found in other tissues.

Its subcellular location is the cell membrane. Cadherins are calcium-dependent cell adhesion proteins. They preferentially interact with themselves in a homophilic manner in connecting cells; cadherins may thus contribute to the sorting of heterogeneous cell types. May play an important role in retinal development. The sequence is that of Cadherin-4 (CDH4) from Homo sapiens (Human).